A 397-amino-acid polypeptide reads, in one-letter code: MTAPGLTAAVEGIAHNKGELFASFDVDAFEVPHGRDEIWRFTPLRRLRGLHDGSARATGSATITVSERPGVYTQTVRRGDPRLGEGGVPTDRVAAQAFSSFNSATLVTVERDTQVVEPVGITVTGPGEGAVAYGHLQVRIEELGEAVVVIDHRGGGTYADNVEFVVDDAARLTAVWIADWADNTVHLSAHHARIGKDAVLRHVTVMLGGDVVRMSAGVRFCGAGGDAELLGLYFADDGQHLESRLLVDHAHPDCKSNVLYKGALQGDPASSLPDAHTVWVGDVLIRAQATGTDTFEVNRNLVLTDGARADSVPNLEIETGEIVGAGHASATGRFDDEQLFYLRSRGIPEAQARRLVVRGFFGEIIAKIAVPEVRERLTAAIEHELEITESTEKTTVS.

Threonine 2 bears the N-acetylthreonine mark.

It belongs to the iron-sulfur cluster assembly SufBD family.

The chain is Iron-sulfur cluster assembly SufBD family protein Rv1462 from Mycobacterium tuberculosis (strain ATCC 25618 / H37Rv).